We begin with the raw amino-acid sequence, 98 residues long: UPF0358 protein LCA_1078 (98 aa).

This sequence belongs to the UPF0358 family.

This Latilactobacillus sakei subsp. sakei (strain 23K) (Lactobacillus sakei subsp. sakei) protein is UPF0358 protein LCA_1078.